Here is a 312-residue protein sequence, read N- to C-terminus: CD-NTase-associated protein 12 (312 aa).

One can recognise a TIR domain in the interval 5–127 (RLFIGSSSEE…FNGLTLARFD (123 aa)).

This sequence in the C-terminal section; belongs to the bacterial STING family. Forms homodimers; in the presence of c-di-GMP forms filaments with an ordered array of parallel-stacked subunits.

It catalyses the reaction NAD(+) + H2O = ADP-D-ribose + nicotinamide + H(+). With respect to regulation, NAD(+) hydrolase activity is strongly stimulated by c-di-GMP, weakly by 3'3'-cGAMP, very weakly by c-di-AMP but not at all by 2'3'-cGAMP. Self-association of TIR domains is required for NADase activity. Functionally, effector protein of a CBASS antiviral system with NAD(+) hydrolase activity. CBASS (cyclic oligonucleotide-based antiphage signaling system) provides immunity against bacteriophage. The CD-NTase protein synthesizes cyclic nucleotides in response to infection; these serve as specific second messenger signals. The signals activate a diverse range of effectors, leading to bacterial cell death and thus abortive phage infection. A type I-D CBASS(GG) system. Binds c-di-GMP, does not bind cUMP-AMP. Upon activation by c-di-GMP forms filaments which hydrolyze NAD(+); filament formation is required for enzyme activation. The protein is CD-NTase-associated protein 12 of Niabella drilacis (strain DSM 25811 / CCM 8410 / CCUG 62505 / LMG 26954 / E90).